A 347-amino-acid polypeptide reads, in one-letter code: MSDRQAALDMALKQIEKQFGKGSIMKLGEKTDTRISTVPSGSLALDTALGIGGYPRGRIIEVYGPESSGKTTVALHAIAEVQEKGGQAAFIDAEHALDPVYAQKLGVNIEELLLSQPDTGEQALEIAEALVRSGAVDIVVVDSVAALVPKAEIEGDMGDSHVGLQARLMSQALRKLSGAINKSKTIAIFINQIREKVGVMFGNPETTPGGRALKFYSSVRLEVRRAEQLKQGNDVMGNKTRIKVVKNKVAPPFRTAEVDIMYGEGISKEGEIIDLGTELDIVQKSGSWYSYEEERLGQGRENAKQFLKENKDIMLMIQEQIREYYGLDNNGVTDKAEEVQEEMELEE.

64 to 71 is an ATP binding site; the sequence is GPESSGKT.

Belongs to the RecA family.

Its subcellular location is the cytoplasm. Functionally, can catalyze the hydrolysis of ATP in the presence of single-stranded DNA, the ATP-dependent uptake of single-stranded DNA by duplex DNA, and the ATP-dependent hybridization of homologous single-stranded DNAs. It interacts with LexA causing its activation and leading to its autocatalytic cleavage. This Bacillus velezensis (strain DSM 23117 / BGSC 10A6 / LMG 26770 / FZB42) (Bacillus amyloliquefaciens subsp. plantarum) protein is Protein RecA.